The primary structure comprises 661 residues: UvrABC system protein B (661 aa).

The region spanning 28-414 is the Helicase ATP-binding domain; that stretch reads DGVNEGKRHQ…HTDEMVEQII (387 aa). Residue 41–48 coordinates ATP; that stretch reads GATGTGKT. The short motif at 94 to 117 is the Beta-hairpin element; the sequence is YYDYYQPEAYVPSTDTFIEKDASI. A Helicase C-terminal domain is found at 432 to 598; the sequence is QIDDLLSEIQ…TINKKIHDVI (167 aa). The interval 603-624 is disordered; the sequence is ESDETNQQQQTELPKKMTKKER. Positions 625–660 constitute a UVR domain; that stretch reads QKTIENIEKEMKKAAKDLDFEKATELRDMLFELKAE.

The protein belongs to the UvrB family. Forms a heterotetramer with UvrA during the search for lesions. Interacts with UvrC in an incision complex.

Its subcellular location is the cytoplasm. Its function is as follows. The UvrABC repair system catalyzes the recognition and processing of DNA lesions. A damage recognition complex composed of 2 UvrA and 2 UvrB subunits scans DNA for abnormalities. Upon binding of the UvrA(2)B(2) complex to a putative damaged site, the DNA wraps around one UvrB monomer. DNA wrap is dependent on ATP binding by UvrB and probably causes local melting of the DNA helix, facilitating insertion of UvrB beta-hairpin between the DNA strands. Then UvrB probes one DNA strand for the presence of a lesion. If a lesion is found the UvrA subunits dissociate and the UvrB-DNA preincision complex is formed. This complex is subsequently bound by UvrC and the second UvrB is released. If no lesion is found, the DNA wraps around the other UvrB subunit that will check the other stand for damage. In Staphylococcus epidermidis (strain ATCC 35984 / DSM 28319 / BCRC 17069 / CCUG 31568 / BM 3577 / RP62A), this protein is UvrABC system protein B.